Here is a 383-residue protein sequence, read N- to C-terminus: ATP phosphoribosyltransferase regulatory subunit (383 aa).

Belongs to the class-II aminoacyl-tRNA synthetase family. HisZ subfamily. As to quaternary structure, heteromultimer composed of HisG and HisZ subunits.

The protein resides in the cytoplasm. Its pathway is amino-acid biosynthesis; L-histidine biosynthesis; L-histidine from 5-phospho-alpha-D-ribose 1-diphosphate: step 1/9. Functionally, required for the first step of histidine biosynthesis. May allow the feedback regulation of ATP phosphoribosyltransferase activity by histidine. This chain is ATP phosphoribosyltransferase regulatory subunit, found in Chromobacterium violaceum (strain ATCC 12472 / DSM 30191 / JCM 1249 / CCUG 213 / NBRC 12614 / NCIMB 9131 / NCTC 9757 / MK).